A 328-amino-acid chain; its full sequence is UPF0194 membrane protein YPA_1093 (328 aa).

An N-terminal signal peptide occupies residues 1 to 22; sequence MNRKKIIVAAVIVALLATLAYG. Coiled coils occupy residues 80–109 and 141–209; these read YLNA…REEE and KAVS…ILLA.

It belongs to the UPF0194 family.

Its subcellular location is the periplasm. The polypeptide is UPF0194 membrane protein YPA_1093 (Yersinia pestis bv. Antiqua (strain Antiqua)).